The sequence spans 302 residues: Bifunctional ligase/repressor BirA (302 aa).

The H-T-H motif DNA-binding region spans 14-33 (QPKVRSELEKFSKNLEEDIQ). Residues 62–236 (QISTALFPYS…HLYTRLNIFE (175 aa)) enclose the BPL/LPL catalytic domain. Biotin contacts are provided by residues 80–82 (STN), Gln103, 107–109 (RGR), and Lys167.

This sequence belongs to the biotin--protein ligase family.

The enzyme catalyses biotin + L-lysyl-[protein] + ATP = N(6)-biotinyl-L-lysyl-[protein] + AMP + diphosphate + H(+). Its function is as follows. Acts both as a biotin--[acetyl-CoA-carboxylase] ligase and a biotin-operon repressor. In the presence of ATP, BirA activates biotin to form the BirA-biotinyl-5'-adenylate (BirA-bio-5'-AMP or holoBirA) complex. HoloBirA can either transfer the biotinyl moiety to the biotin carboxyl carrier protein (BCCP) subunit of acetyl-CoA carboxylase, or bind to the biotin operator site and inhibit transcription of the operon. The chain is Bifunctional ligase/repressor BirA from Haemophilus influenzae (strain ATCC 51907 / DSM 11121 / KW20 / Rd).